The chain runs to 160 residues: Cytochrome b6-f complex subunit 4 (160 aa).

The next 3 membrane-spanning stretches (helical) occupy residues 36 to 56 (LLYI…GLAV), 95 to 115 (LLGV…PFLE), and 131 to 151 (TVFL…TLPI).

Belongs to the cytochrome b family. PetD subfamily. As to quaternary structure, the 4 large subunits of the cytochrome b6-f complex are cytochrome b6, subunit IV (17 kDa polypeptide, petD), cytochrome f and the Rieske protein, while the 4 small subunits are petG, petL, petM and petN. The complex functions as a dimer.

The protein localises to the plastid. The protein resides in the chloroplast thylakoid membrane. Its function is as follows. Component of the cytochrome b6-f complex, which mediates electron transfer between photosystem II (PSII) and photosystem I (PSI), cyclic electron flow around PSI, and state transitions. This chain is Cytochrome b6-f complex subunit 4, found in Morus indica (Mulberry).